The primary structure comprises 163 residues: Late embryogenesis abundant protein Dc3 (163 aa).

Disordered stretches follow at residues M1–M117 and F139–E163. 3 stretches are compositionally biased toward basic and acidic residues: residues T28–D56, G67–T84, and T91–T113. 6 repeat units span residues K32–E42, M43–E53, K65–E75, T76–G86, A87–E97, and K103–G115. Positions K32–G115 are 6 X 11 AA approximate repeats. The segment covering T152 to E163 has biased composition (low complexity).

This sequence belongs to the LEA type 4 family.

This chain is Late embryogenesis abundant protein Dc3, found in Daucus carota (Wild carrot).